The sequence spans 815 residues: SNF1 protein kinase subunit beta-1 (815 aa).

The segment covering 1–11 (MGNSPSTQDPS) has biased composition (polar residues). 2 disordered regions span residues 1-88 (MGNS…TIDK) and 117-148 (SDDH…KQTK). A lipid anchor (N-myristoyl glycine) is attached at G2. Basic and acidic residues predominate over residues 12 to 31 (HSTKKEHGHHFHDAFNKDRQ). Polar residues predominate over residues 32–42 (GSITSQLFNNR). Position 33 is a phosphoserine (S33). Basic and acidic residues-rich tracts occupy residues 72-88 (PSTD…TIDK) and 117-129 (SDDH…EEQV). 6 positions are modified to phosphoserine: S181, S198, S200, S206, S209, and S220. Disordered stretches follow at residues 310 to 335 (SHAN…NDDF), 363 to 389 (HQNK…FASL), and 410 to 444 (PLHP…SSIS). Residues 313 to 326 (NNNGNIENNTRNKG) show a composition bias toward low complexity. A Phosphoserine modification is found at S331. Residues 363 to 376 (HQNKTKKAQNKKIR) show a composition bias toward basic residues. 2 stretches are compositionally biased toward low complexity: residues 377–389 (SASN…FASL) and 433–444 (HSNSMSSMSSIS). Residues 473-716 (VSTDIASALK…LQQGGNIDAE (244 aa)) are kinase-interacting sequence (KIS); required for interaction with SNF1. A phosphoserine mark is found at S494 and S497. The interval 583–616 (TLDEELPKRPELKRFPSSSRKSSYYSAKGVERPS) is disordered. A compositionally biased stretch (basic and acidic residues) spans 587 to 596 (ELPKRPELKR). Low complexity predominate over residues 599-608 (SSSRKSSYYS). Residue S643 is modified to Phosphoserine. Positions 724–804 (SRYPVPDLPI…FITQVVYAPC (81 aa)) are association with SNF1 kinase complex (ASC) domain; required for interaction with SNF4.

This sequence belongs to the 5'-AMP-activated protein kinase beta subunit family. As to quaternary structure, component of the SNF1 kinase complex, a heterotrimeric complex composed of the catalytic alpha subunit SNF1, one of the three related beta subunits SIP1, SIP2 or GAL83, and the regulatory gamma subunit SNF4. The beta subunit serves as a bridge between the catalytic and the regulatory subunit. Interacts (via KIS domain) with SNF1. Interacts (via ASC domain) with SNF4. In terms of processing, phosphorylated by SNF1 in vitro.

It localises to the cytoplasm. It is found in the vacuole membrane. Functionally, beta subunit of the SNF1 kinase complex, which is required for transcriptional, metabolic, and developmental adaptations in response to glucose limitation. Has a structural role, mediating heterotrimer formation, and a regulatory role, defining carbon source-regulated subcellular location and substrate specificity of the SNF1 kinase complex. Promotes the PKA-regulated relocalization of the SNF1 kinase complex to the vacuolar membrane in response to various types of carbon stress. This chain is SNF1 protein kinase subunit beta-1 (SIP1), found in Saccharomyces cerevisiae (strain YJM789) (Baker's yeast).